An 894-amino-acid polypeptide reads, in one-letter code: Alpha-actinin-2 (894 aa).

The tract at residues 1–254 (MNQIEPGVQY…IMTYVSCFYH (254 aa)) is actin-binding. Calponin-homology (CH) domains are found at residues 38–142 (KQQR…LRFA) and 151–257 (TSAK…HAFA). Threonine 237 bears the Phosphothreonine mark. Spectrin repeat units follow at residues 281-391 (RLME…WLLN), 401-506 (HLAE…ALER), 516-627 (QLHL…SLQE), and 637-740 (RLRR…EVET). 2 consecutive EF-hand domains span residues 753 to 788 (EQMNEFRASFNHFDRRKNGLMDHEDFRACLISMGYD) and 789 to 824 (LGEAEFARIMTLVDPNGQGTVTFQSFIDFMTRETAD). Residues aspartate 766, asparagine 770, aspartate 777, aspartate 802, asparagine 804, and threonine 808 each contribute to the Ca(2+) site.

It belongs to the alpha-actinin family. Homodimer; antiparallel. Also forms heterodimers with ACTN3. Interacts with ADAM12, MYOZ1, MYOZ2 and MYOZ3. Interacts via its C-terminal region with the LDB3 PDZ domain. Interacts with XIRP2. Interacts with DST (via N-terminus). Interacts with PARVB. Interacts with SYNPO2. Ubiquitinated by FBXL22, leading to proteasomal degradation.

It is found in the cytoplasm. Its subcellular location is the myofibril. The protein resides in the sarcomere. It localises to the z line. In terms of biological role, F-actin cross-linking protein which is thought to anchor actin to a variety of intracellular structures. This is a bundling protein. The protein is Alpha-actinin-2 (ACTN2) of Bos taurus (Bovine).